Here is a 261-residue protein sequence, read N- to C-terminus: Cell division protein B (261 aa).

Residues 213 to 261 form a winged-helix-like fold region; sequence SEDMILNYIKTTGGFIDVDYIAKNFDVSKDEVFNVLRRLEEKGLIVLEG.

In terms of assembly, interacts with CdvA. Interacts with CdvC.

The protein resides in the cytoplasm. Its subcellular location is the nucleoid. Its function is as follows. Part of a cell division machinery. The CdvA, CdvB and CdvC proteins polymerize between segregating nucleoids and persist throughout cell division, forming a successively smaller structure during constriction. The polypeptide is Cell division protein B (Sulfolobus acidocaldarius (strain ATCC 33909 / DSM 639 / JCM 8929 / NBRC 15157 / NCIMB 11770)).